The chain runs to 651 residues: MSGELNGNDTSVQAAVSAGSVLEGAAFADEGEQHNESMKTLVLGALGVVYGDIGTSPIYAFREALHAAATNGILARSDILGVVSFIFWALTLVVTVKYVLFVLRADNNGEGGILSLMALVRGALKGRPDLILGVGICGAALFFGDAVITPAISVLSAMEGLEIVAPNLTPFVVPATVVILVTLFSVQKLGTGRVAIVFGPIMALWFVALGASGLWHIFDDPTVMAALNPYYAVRFLTVSPAVAFVTVGAVFLAMTGAEALYADLGHFGRKPIVRAWLWIVFPCLLLNYFGQAAFILSHGEAAALPFFQMIPSFALWPMVLLATAATVIASQAVITGAYSVARQAVQLNILPRLEIQHTSEKLHGQIYIPRVNLLLGLAVVILVLGFEKSSNLAAAYGIAVTGNMLVTTVLLYIVMTRIWNWRVSRALPIILGFLVIDMLFFSANIIKVHEGGWASIGIATVLVLIMWTWVRGTRHLFQKTRKAEVPLDLIVEQMAKRPPTIVPGTAVFLTGDPKSAPTALMHSLKHYKVLHENNVILTVVTASKPWVALADRARVSQYNERFMLVTLTFGYMQQPNIPRALGLCRRLGWKFDIMTTSFFLSRRSLKASVHSGMPLWQDKLFILLARTASDATEYFQIPTGRVVEIGTQVNI.

A run of 12 helical transmembrane segments spans residues 41-61 (LVLGALGVVYGDIGTSPIYAF), 82-102 (VVSFIFWALTLVVTVKYVLFV), 130-150 (LILGVGICGAALFFGDAVITP), 163-183 (IVAPNLTPFVVPATVVILVTL), 194-214 (VAIVFGPIMALWFVALGASGL), 235-255 (FLTVSPAVAFVTVGAVFLAMT), 276-296 (WLWIVFPCLLLNYFGQAAFIL), 309-329 (MIPSFALWPMVLLATAATVIA), 366-386 (IYIPRVNLLLGLAVVILVLGF), 395-415 (AYGIAVTGNMLVTTVLLYIVM), 426-446 (ALPIILGFLVIDMLFFSANII), and 450-470 (EGGWASIGIATVLVLIMWTWV).

Belongs to the HAK/KUP transporter (TC 2.A.72) family.

The protein resides in the cell inner membrane. The catalysed reaction is K(+)(in) + H(+)(in) = K(+)(out) + H(+)(out). Its function is as follows. Transport of potassium into the cell. Likely operates as a K(+):H(+) symporter. In Brucella ovis (strain ATCC 25840 / 63/290 / NCTC 10512), this protein is Probable potassium transport system protein Kup.